A 698-amino-acid polypeptide reads, in one-letter code: MEEPSPVPPAAAPASLAAAPPTTDVLSRRRAHLDSASYRALSRLFSHCLHLHPPRHAARPDAEVEPAAAAAIPPGGSGGLPHGDSPPPADVGGDRGKNLEVEVALGNHAPHETPSTSASPDAAVNPTTDPGVVPQGTEEGRVAGVERVEGVEEVVFAGGTSGEADADGDELGAGAGLMGDDEALRSMQACLDGEDSELVIEMVGNDNEQLQLDAMMNNLSGLIDDASACVMSAQSCGVSGDKLQSDDRVAEEVKELGAGIGNDRSVCSLDHGSLDGGGGFEEGEIEGDTQNLDADDSGNSELQDDVELEEDFDSRRIEEDGSCGHDLKSNLHLIPQKGNGDTARNMLCNSKGDSQMHVARAQAVSYDEVLDWNETPLPDDKALKHGNTRKRTLTEERKAKKTKTKRIKRALQREAEGVKRLKLQPVIKPKVVKVCHFYLHGKCQQGNLCKFSHDTTPLTKSKPCTHYARGSCLKGDDCPYDHELSKYPCHNFMENGMCIRGDKCKFSHVIPTAEGPSTPDAKKSNASSVPEKANCQEQTSRQKTSTVYSGEPATSVPIKHHSILKNLAGISGNAQKVPVRIPRGIQFLPFNKARPDSSILHQDVVSTEKHKNPTGGPHQNFGRPQPADGKKLGKHNGHRSAPLLDEKDSSKQANLHPCSEPKKNSLPTTAAVPSSVSTQHEVSEASRILQEFLFGSGN.

Positions 1-11 (MEEPSPVPPAA) are enriched in pro residues. 4 disordered regions span residues 1–23 (MEEPSPVPPAAAPASLAAAPPTT), 56–95 (HAARPDAEVEPAAAAAIPPGGSGGLPHGDSPPPADVGGDR), 109–137 (APHETPSTSASPDAAVNPTTDPGVVPQGT), and 272–300 (GSLDGGGGFEEGEIEGDTQNLDADDSGNS). 2 stretches are compositionally biased toward low complexity: residues 12-21 (APASLAAAPP) and 65-74 (EPAAAAAIPP). Positions 281-300 (EEGEIEGDTQNLDADDSGNS) are enriched in acidic residues. 3 consecutive C3H1-type zinc fingers follow at residues 429–456 (PKVVKVCHFYLHGKCQQGNLCKFSHDTT), 458–485 (LTKSKPCTHYARGSCLKGDDCPYDHELS), and 486–511 (KYPCHNFMENGMCIRGDKCKFSHVIP). 2 disordered regions span residues 512–553 (TAEG…GEPA) and 607–682 (TEKH…QHEV). 2 stretches are compositionally biased toward polar residues: residues 535–548 (CQEQTSRQKTSTVY) and 665–680 (SLPTTAAVPSSVSTQH).

This chain is Zinc finger CCCH domain-containing protein 7, found in Oryza sativa subsp. japonica (Rice).